The sequence spans 1168 residues: Homeodomain-interacting protein kinase 2 (1168 aa).

A Phosphoserine modification is found at Ser-16. Residue Lys-32 forms a Glycyl lysine isopeptide (Lys-Gly) (interchain with G-Cter in SUMO); alternate linkage. Residue Lys-32 forms a Glycyl lysine isopeptide (Lys-Gly) (interchain with G-Cter in SUMO2); alternate linkage. Residues Ser-97 to Leu-230 form a transcriptional corepression region. A phosphoserine mark is found at Ser-118 and Ser-135. Thr-141 is subject to Phosphothreonine. The tract at residues His-189–Glu-520 is interaction with DAXX. The Protein kinase domain occupies Tyr-199–Val-527. ATP is bound by residues Leu-205–Val-213 and Lys-228. 2 positions are modified to phosphothreonine: Thr-252 and Thr-273. Asp-324 acts as the Proton acceptor in catalysis. At Tyr-361 the chain carries Phosphotyrosine. A Phosphoserine modification is found at Ser-441. Phosphothreonine occurs at positions 482, 517, and 566. Positions Thr-539–Met-816 are interaction with SKI and SMAD1. An interaction with DAZAP2 region spans residues Pro-595–Ser-772. Ser-607 and Ser-641 each carry phosphoserine. Thr-660 bears the Phosphothreonine mark. The interval Arg-724 to Glu-869 is interaction with POU4F1. The segment at His-746–Val-848 is interaction with CTBP1. The segment at Val-759–Glu-869 is interaction with HMGA1. The disordered stretch occupies residues Arg-764–Ser-820. Over residues Gln-765–Val-791 the composition is skewed to polar residues. The Nuclear localization signal 1 (NLS1) motif lies at Arg-774–Lys-777. Phosphoserine occurs at positions 787 and 799. Residues Thr-792–Gln-801 show a composition bias toward low complexity. Positions Lys-804–Lys-807 match the Nuclear localization signal 2 (NLS2) motif. The interval Pro-812–Pro-907 is interaction with TP53 and TP73. The interval Gln-845–Thr-879 is interaction with UBE2I. The tract at residues Gln-845 to Leu-952 is localization to nuclear speckles. The segment at Gln-845 to Leu-952 is required for localization to nuclear speckles. Positions Ser-854–Pro-876 are interaction with UBL1. The tract at residues Thr-856–Val-880 is SUMO interaction motifs (SIM); required for nuclear localization and kinase activity. The disordered stretch occupies residues His-894–Pro-936. Residues Asp-895 to Ser-909 show a composition bias toward low complexity. Ser-906 is subject to Phosphoserine. The segment at Pro-907–Thr-1022 is interaction with AXIN1. Residues Val-910–Asp-923 show a composition bias toward polar residues. Glycyl lysine isopeptide (Lys-Gly) (interchain with G-Cter in SUMO2) cross-links involve residues Lys-925 and Lys-945. The segment at Asp-956–Ile-1168 is autoinhibitory domain (AID). Residues Pro-960–Arg-1030 are disordered. The residue at position 963 (Ser-963) is a Phosphoserine. Composition is skewed to low complexity over residues Gly-965–Ser-991 and Gln-998–Pro-1018. Residues Ser-1014, Ser-1125, and Ser-1158 each carry the phosphoserine modification. A Glycyl lysine isopeptide (Lys-Gly) (interchain with G-Cter in SUMO) cross-link involves residue Lys-1161.

It belongs to the protein kinase superfamily. CMGC Ser/Thr protein kinase family. HIPK subfamily. Interacts with CREB1, SIAH1, WSB1, CBX4, TRADD, p53/TP53, TP73, TP63, CREBBP, DAXX, P53DINP1, SKI, SMAD1, SMAD2 and SMAD3, but not SMAD4. Interacts with ATF1, PML, RUNX1, EP300, NKX1-2, NKX2-5, UBE2I, HMGA1, CTBP1, AXIN1, NLK, MYB, POU4F1, POU4F2, POU4F3, UBE2I, UBL1 and ZBTB4. Probably part of a complex consisting of p53/TP53, HIPK2 and AXIN1. Interacts with SP100; positively regulates TP53-dependent transcription. Interacts with DAZAP2; the interaction results in phosphorylation of DAZAP2 which causes localization of DAZAP2 to the nucleus, reduces interaction of DAZAP2 with HIPK2 and prevents DAZAP2-dependent degradation of HIPK2. Interacts with SIAH1; the interaction is promoted by DAZAP2 and results in SIAH1-mediated ubiquitination and subsequent proteasomal degradation of HIPK2. Autophosphorylation at Tyr-361 in the activation loop activates the kinase and promotes nuclear localization. Post-translationally, sumoylated. When conjugated it is directed to nuclear speckles. Desumoylated by SENP1. Sumoylation on Lys-32 is promoted by the E3 SUMO-protein ligase CBX4. In terms of processing, ubiquitinated by FBXO3, WSB1 and SIAH1, leading to rapid proteasome-dependent degradation. The degradation mediated by FBXO3, but not ubiquitination, is prevented in the presence of PML. The degradation mediated by WSB1 and SIAH1 is reversibly reduced upon DNA damage. Cleaved at Asp-895 and Asp-956 by CASP6 in a p53/TP53-dependent manner. The cleaved form lacks the autoinhibitory C-terminal domain (AID), resulting in a hyperactive kinase, which potentiates p53/TP53 Ser-46 phosphorylation and subsequent activation of the cell death machinery.

The protein localises to the nucleus. The protein resides in the PML body. It is found in the cytoplasm. It catalyses the reaction L-seryl-[protein] + ATP = O-phospho-L-seryl-[protein] + ADP + H(+). The catalysed reaction is L-threonyl-[protein] + ATP = O-phospho-L-threonyl-[protein] + ADP + H(+). In terms of biological role, serine/threonine-protein kinase involved in transcription regulation, p53/TP53-mediated cellular apoptosis and regulation of the cell cycle. Acts as a corepressor of several transcription factors, including SMAD1 and POU4F1/Brn3a and probably NK homeodomain transcription factors. Phosphorylates PDX1, ATF1, PML, p53/TP53, CREB1, CTBP1, CBX4, RUNX1, EP300, CTNNB1, HMGA1, ZBTB4 and DAZAP2. Inhibits cell growth and promotes apoptosis through the activation of p53/TP53 both at the transcription level and at the protein level (by phosphorylation and indirect acetylation). The phosphorylation of p53/TP53 may be mediated by a p53/TP53-HIPK2-AXIN1 complex. Involved in the response to hypoxia by acting as a transcriptional co-suppressor of HIF1A. Mediates transcriptional activation of TP73. In response to TGFB, cooperates with DAXX to activate JNK. Negative regulator through phosphorylation and subsequent proteasomal degradation of CTNNB1 and the antiapoptotic factor CTBP1. In the Wnt/beta-catenin signaling pathway acts as an intermediate kinase between MAP3K7/TAK1 and NLK to promote the proteasomal degradation of MYB. Phosphorylates CBX4 upon DNA damage and promotes its E3 SUMO-protein ligase activity. Activates CREB1 and ATF1 transcription factors by phosphorylation in response to genotoxic stress. In response to DNA damage, stabilizes PML by phosphorylation. PML, HIPK2 and FBXO3 may act synergically to activate p53/TP53-dependent transactivation. Promotes angiogenesis, and is involved in erythroid differentiation, especially during fetal liver erythropoiesis. Phosphorylation of RUNX1 and EP300 stimulates EP300 transcription regulation activity. Triggers ZBTB4 protein degradation in response to DNA damage. In response to DNA damage, phosphorylates DAZAP2 which localizes DAZAP2 to the nucleus, reduces interaction of DAZAP2 with HIPK2 and prevents DAZAP2-dependent ubiquitination of HIPK2 by E3 ubiquitin-protein ligase SIAH1 and subsequent proteasomal degradation. Modulates HMGA1 DNA-binding affinity. In response to high glucose, triggers phosphorylation-mediated subnuclear localization shifting of PDX1. Involved in the regulation of eye size, lens formation and retinal lamination during late embryogenesis. This is Homeodomain-interacting protein kinase 2 (Hipk2) from Mesocricetus auratus (Golden hamster).